A 142-amino-acid polypeptide reads, in one-letter code: Putative pre-16S rRNA nuclease (142 aa).

Belongs to the YqgF nuclease family.

The protein resides in the cytoplasm. Functionally, could be a nuclease involved in processing of the 5'-end of pre-16S rRNA. The polypeptide is Putative pre-16S rRNA nuclease (Azotobacter vinelandii (strain DJ / ATCC BAA-1303)).